The sequence spans 269 residues: Energy-coupling factor transporter transmembrane protein EcfT (269 aa).

A run of 5 helical transmembrane segments spans residues 28 to 48 (MIIY…LLLL), 49 to 69 (AFTL…FNGV), 73 to 93 (IGII…GSVL), 109 to 129 (AILI…LTLT), and 246 to 266 (TLAI…KSPS).

The protein belongs to the energy-coupling factor EcfT family. Forms a stable energy-coupling factor (ECF) transporter complex composed of 2 membrane-embedded substrate-binding proteins (S component), 2 ATP-binding proteins (A component) and 2 transmembrane proteins (T component). May be able to interact with more than 1 S component at a time.

The protein resides in the cell membrane. Transmembrane (T) component of an energy-coupling factor (ECF) ABC-transporter complex. Unlike classic ABC transporters this ECF transporter provides the energy necessary to transport a number of different substrates. In Streptococcus equi subsp. equi (strain 4047), this protein is Energy-coupling factor transporter transmembrane protein EcfT.